The following is a 68-amino-acid chain: Large ribosomal subunit protein uL29 (68 aa).

The protein belongs to the universal ribosomal protein uL29 family.

The sequence is that of Large ribosomal subunit protein uL29 from Chlorobaculum tepidum (strain ATCC 49652 / DSM 12025 / NBRC 103806 / TLS) (Chlorobium tepidum).